A 642-amino-acid polypeptide reads, in one-letter code: Serine/threonine-protein kinase pakA (642 aa).

2 stretches are compositionally biased toward polar residues: residues Met1–Phe12 and Leu38–Asn48. Positions Met1–Asn82 are disordered. The region spanning Ile100–Gly113 is the CRIB domain. 2 disordered regions span residues Gly180 to Glu276 and Gln317 to Gln338. Composition is skewed to low complexity over residues Ser217–Ser227 and Val254–Asn266. One can recognise a Protein kinase domain in the interval Tyr361 to Met612. ATP is bound by residues Ile367–Val375 and Lys390. Catalysis depends on Asp480, which acts as the Proton acceptor.

It belongs to the protein kinase superfamily. STE Ser/Thr protein kinase family. STE20 subfamily.

Its subcellular location is the cytoplasm. It is found in the nucleus. The catalysed reaction is L-seryl-[protein] + ATP = O-phospho-L-seryl-[protein] + ADP + H(+). The enzyme catalyses L-threonyl-[protein] + ATP = O-phospho-L-threonyl-[protein] + ADP + H(+). Its function is as follows. MAP4K component of the MAPK pathway required for the mating pheromone response and the regulation of cell polarity and cell cycle. The protein is Serine/threonine-protein kinase pakA (pakA) of Talaromyces marneffei (Penicillium marneffei).